A 428-amino-acid chain; its full sequence is Ribosome biogenesis protein WDR12 homolog (428 aa).

A ubiquitin-like (UBL) domain region spans residues 13–97 (LQVHFTTKQK…EDTIELEYVE (85 aa)). 7 WD repeats span residues 109 to 146 (LHDD…KLTI), 148 to 190 (GHVA…NTAE), 197 to 236 (GHER…DKGE), 259 to 297 (GHRE…IKTE), 299 to 338 (TGNK…GNFV), 344 to 384 (GHSQ…APIF), and 388 to 426 (GHED…DNTK).

This sequence belongs to the WD repeat WDR12/YTM1 family.

The protein resides in the nucleus. It localises to the nucleolus. Its subcellular location is the nucleoplasm. In terms of biological role, required for maturation of ribosomal RNAs and formation of the large ribosomal subunit. In Anopheles gambiae (African malaria mosquito), this protein is Ribosome biogenesis protein WDR12 homolog.